A 471-amino-acid polypeptide reads, in one-letter code: MTDLPNNVRWQLWIVAFGFFMQSLDTTIVNTALPSMAKSLGESPLHMHMVIVSYVLTVAVMLPASGWMADKIGVRNIFFTAIVLFTLGSLFCAKADTLNELVMSRVLQGVGGAMMVPVGRLTVMKIVPREQYMAAMTFVTLPGQVGPLLGPALGGILVEYASWHWIFLINLPVGIVGAIATLWLMPNYKMQTRRFDIFGFVLLAAGMATLTLALDGQKGLGISTLTLCLLIVIGIVSILWYLWHARDNDRALFSLALFRNTTYRIGLFGSFVGRLGSGMLPFMTPVFLQIGLGFSPFHAGLMMIPMVLGSMGMKRIVVQVVNYFGYRRVLVVCTLGLALISLVFMAVALMGWYYVLPLVLFFQGMINSTRFSSMNTLTLKDLPDELASSGNSLLSMIMQLSMSVGVTVAGLLLGMYGQQHLGADTAGAHHVFLYTYLSMAVIIALPALIFARVPNDTSKNVVIGRRKRSER.

The next 13 membrane-spanning stretches (helical) occupy residues 12–32 (LWIVAFGFFMQSLDTTIVNTA), 49–69 (MVIVSYVLTVAVMLPASGWMA), 72–92 (IGVRNIFFTAIVLFTLGSLFC), 101–123 (LVMSRVLQGVGGAMMVPVGRLTV), 138–158 (FVTLPGQVGPLLGPALGGILV), 165–185 (WIFLINLPVGIVGAIATLWLM), 195–215 (FDIFGFVLLAAGMATLTLALD), 220–240 (LGISTLTLCLLIVIGIVSILW), 265–285 (IGLFGSFVGRLGSGMLPFMTP), 286–306 (VFLQIGLGFSPFHAGLMMIPM), 342–362 (LVFMAVALMGWYYVLPLVLFF), 393–413 (LLSMIMQLSMSVGVTVAGLLL), and 431–451 (VFLYTYLSMAVIIALPALIFA).

Belongs to the major facilitator superfamily. TCR/Tet family.

The protein localises to the cell inner membrane. This chain is Putative multidrug resistance protein MdtD, found in Enterobacter sp. (strain 638).